A 326-amino-acid chain; its full sequence is Archaeal actin homolog (326 aa).

Residues 10–14 (YGDTK), Ser179, Gln231, 285–288 (GGSN), and Gln311 contribute to the ATP site.

It belongs to the thermophilic archaeal actin family.

Functionally, polymerizes into bundles of filaments, forming a helix with a filament width of 5.5 nm and an axial repeating unit of 5.5 nm. Polymerization of Ta0583 requires NTP and is optimal with ATP, but GTP, UTP, CTP, and even the deoxy form of NTP can also support the polymerization reaction. Nucleoside diphosphate or AMP-PNP does not support polymerization. This is Archaeal actin homolog from Thermoplasma acidophilum (strain ATCC 25905 / DSM 1728 / JCM 9062 / NBRC 15155 / AMRC-C165).